Consider the following 270-residue polypeptide: Formamidopyrimidine-DNA glycosylase (270 aa).

Catalysis depends on Pro-2, which acts as the Schiff-base intermediate with DNA. Glu-3 functions as the Proton donor in the catalytic mechanism. The active-site Proton donor; for beta-elimination activity is the Lys-58. Residues His-90 and Arg-109 each coordinate DNA. An FPG-type zinc finger spans residues 237 to 270 (KVYGKEGEQCECGHTIERYTLGGRSTFLCSSCQK). Arg-260 functions as the Proton donor; for delta-elimination activity in the catalytic mechanism.

It belongs to the FPG family. Monomer. Zn(2+) serves as cofactor.

It carries out the reaction Hydrolysis of DNA containing ring-opened 7-methylguanine residues, releasing 2,6-diamino-4-hydroxy-5-(N-methyl)formamidopyrimidine.. The catalysed reaction is 2'-deoxyribonucleotide-(2'-deoxyribose 5'-phosphate)-2'-deoxyribonucleotide-DNA = a 3'-end 2'-deoxyribonucleotide-(2,3-dehydro-2,3-deoxyribose 5'-phosphate)-DNA + a 5'-end 5'-phospho-2'-deoxyribonucleoside-DNA + H(+). Its function is as follows. Involved in base excision repair of DNA damaged by oxidation or by mutagenic agents. Acts as a DNA glycosylase that recognizes and removes damaged bases. Has a preference for oxidized purines, such as 7,8-dihydro-8-oxoguanine (8-oxoG). Has AP (apurinic/apyrimidinic) lyase activity and introduces nicks in the DNA strand. Cleaves the DNA backbone by beta-delta elimination to generate a single-strand break at the site of the removed base with both 3'- and 5'-phosphates. The chain is Formamidopyrimidine-DNA glycosylase (mutM) from Zymomonas mobilis subsp. mobilis (strain ATCC 31821 / ZM4 / CP4).